The following is an 82-amino-acid chain: U-actitoxin-Avd3h (82 aa).

A signal peptide spans 1–16 (MVFLLCFFLVADVSYG). The BPTI/Kunitz inhibitor domain maps to 21–71 (CELPKVVGPCRARFPRYYYNSSSKRCEKFIYGGCRGNANNFHTLEECEKVC). 3 disulfide bridges follow: Cys21-Cys71, Cys30-Cys54, and Cys46-Cys67. The propeptide occupies 76–82 (RDSPKEN).

The protein belongs to the venom Kunitz-type family. Sea anemone type 2 potassium channel toxin subfamily.

It localises to the secreted. The protein localises to the nematocyst. Its function is as follows. Dual-function toxin that inhibits both the serine protease trypsin (Kd=30 nM) and voltage-gated potassium channels Kv1.2/KCNA2 (IC(50)=2800 nM). This is U-actitoxin-Avd3h from Anemonia viridis (Snakelocks anemone).